A 206-amino-acid polypeptide reads, in one-letter code: Inner membrane-spanning protein YciB (206 aa).

5 consecutive transmembrane segments (helical) span residues 22-42, 50-70, 76-96, 118-138, and 148-168; these read IYTATGALIVASAVQIILTYF, MQVITFLMVAVFGGMTIFLHD, WKVTIVYALFAIGLTVSHIMG, INWAWTLFFTLCAILNVYVAF, and FKVFGLLIATFAFTLLTGVYI. The segment covering 178–189 has biased composition (basic and acidic residues); that stretch reads LPKDKHQQRDQE. The segment at 178–206 is disordered; the sequence is LPKDKHQQRDQETQNDTQQELSGKNTEEK. A compositionally biased stretch (polar residues) spans 191–206; sequence QNDTQQELSGKNTEEK.

Belongs to the YciB family.

It localises to the cell inner membrane. Plays a role in cell envelope biogenesis, maintenance of cell envelope integrity and membrane homeostasis. This is Inner membrane-spanning protein YciB from Vibrio atlanticus (strain LGP32) (Vibrio splendidus (strain Mel32)).